A 256-amino-acid polypeptide reads, in one-letter code: Lysine-rich coiled-coil protein 1 (256 aa).

Disordered stretches follow at residues 62–84 and 144–256; these read RLPS…EDRV and TIDP…ILGF. Positions 64–79 are enriched in polar residues; it reads PSGTNHSYPRSCSSSQ. Composition is skewed to basic and acidic residues over residues 161-188 and 218-227; these read HVEE…DLNK and KTRDVSSKKE. Positions 209-247 form a coiled coil; that stretch reads EKLKNRKEKKTRDVSSKKEDRKRRKEKKEQGEERTEEEM.

In Mus musculus (Mouse), this protein is Lysine-rich coiled-coil protein 1 (Krcc1).